The following is a 412-amino-acid chain: CHRNA7-FAM7A fusion protein (412 aa).

5 consecutive transmembrane segments (helical) span residues 144 to 164, 172 to 192, 205 to 225, 240 to 254, and 380 to 400; these read GLNL…VFLL, ISLG…VAEI, QYFA…VIVL, WTRV…WFLR, and LCLM…LMSA.

It belongs to the ligand-gated ion channel (TC 1.A.9) family. As to expression, expressed in hippocampus.

It localises to the membrane. This is CHRNA7-FAM7A fusion protein (CHRFAM7A) from Homo sapiens (Human).